A 150-amino-acid chain; its full sequence is UPF0208 membrane protein VIBHAR_02941 (150 aa).

2 helical membrane-spanning segments follow: residues 42–62 (FGIKVMPAVAAISVLTQMAFN) and 70–90 (AIVVALFAISMPLQGMWWLGS).

The protein belongs to the UPF0208 family.

It localises to the cell inner membrane. The chain is UPF0208 membrane protein VIBHAR_02941 from Vibrio campbellii (strain ATCC BAA-1116).